Reading from the N-terminus, the 1083-residue chain is Kinesin-like protein KIN-14R (1083 aa).

Positions 264–418 (HDKYEKKIAE…NHIQETKGNI (155 aa)) form a coiled coil. One can recognise a Kinesin motor domain in the interval 417–739 (NIRVFCRCRP…LNFATRVRGV (323 aa)). 500–507 (GQTGTGKT) is an ATP binding site. Coiled-coil stretches lie at residues 746–876 (KQVD…SEGS) and 905–947 (IKEL…MATT). Residues 967 to 1083 (EDNFGNENME…RDSKKKIWSR (117 aa)) are disordered. Polar residues predominate over residues 971 to 985 (GNENMESNTNILRTS). Over residues 1020 to 1032 (PQMKEKRIRKSDP) the composition is skewed to basic and acidic residues. A compositionally biased stretch (polar residues) spans 1044–1054 (RTASGSSSQVP). Basic and acidic residues predominate over residues 1062–1083 (KREQQEVPVVKERDSKKKIWSR).

The protein belongs to the TRAFAC class myosin-kinesin ATPase superfamily. Kinesin family. KIN-14 subfamily.

The chain is Kinesin-like protein KIN-14R from Arabidopsis thaliana (Mouse-ear cress).